A 360-amino-acid chain; its full sequence is Alpha-ketoglutarate dependent kainoid synthase (360 aa).

Residues 200-310 (MFFSNRIYPE…RASLISFYEP (111 aa)) form the Fe2OG dioxygenase domain. Residues His225, Asp227, and His286 each contribute to the Fe cation site. Arg301 provides a ligand contact to 2-oxoglutarate.

It belongs to the iron/ascorbate-dependent oxidoreductase family. The cofactor is Fe(2+).

It catalyses the reaction prekainate + 2-oxoglutarate + O2 = kainate + succinate + CO2 + H2O. The enzyme catalyses prekainate + 2-oxoglutarate + O2 + H(+) = kainate lactone + succinate + CO2 + H2O. The protein operates within secondary metabolite biosynthesis. Its activity is regulated as follows. Inhibited by the iron chelator EDTA. Functionally, iron/ascorbate-dependent oxidoreductase: part of the gene cluster that mediates the biosynthesis of kainic acid (KA) and derivatives, natural products with neurochemical activity acting as ionotropic glutamate receptor (iGluR) agonists, thus being neurotoxins. Catalyzes the conversion of prekainic acid to kainic acid and kainic acid lactone. In Digenea simplex (Marine red alga), this protein is Alpha-ketoglutarate dependent kainoid synthase.